A 145-amino-acid chain; its full sequence is Transcriptional regulator MraZ (145 aa).

2 consecutive SpoVT-AbrB domains span residues 7 to 54 and 83 to 126; these read NATN…GPDL and GVFM…QPQA.

It belongs to the MraZ family. As to quaternary structure, forms oligomers.

The protein localises to the cytoplasm. The protein resides in the nucleoid. This is Transcriptional regulator MraZ from Rhizobium johnstonii (strain DSM 114642 / LMG 32736 / 3841) (Rhizobium leguminosarum bv. viciae).